An 82-amino-acid polypeptide reads, in one-letter code: RNA-binding protein Hfq (82 aa).

In terms of domain architecture, Sm spans 9-68; sequence DPYLNTLRKERVPVSIYLVNGIKLQGQIESFDQFVILLKNTVSQMVYKHAISTVVPSRPV.

This sequence belongs to the Hfq family. As to quaternary structure, homohexamer.

Its function is as follows. RNA chaperone that binds small regulatory RNA (sRNAs) and mRNAs to facilitate mRNA translational regulation in response to envelope stress, environmental stress and changes in metabolite concentrations. Also binds with high specificity to tRNAs. This Pseudomonas aeruginosa (strain LESB58) protein is RNA-binding protein Hfq.